A 479-amino-acid polypeptide reads, in one-letter code: Aspartyl/glutamyl-tRNA(Asn/Gln) amidotransferase subunit B (479 aa).

It belongs to the GatB/GatE family. GatB subfamily. Heterotrimer of A, B and C subunits.

The enzyme catalyses L-glutamyl-tRNA(Gln) + L-glutamine + ATP + H2O = L-glutaminyl-tRNA(Gln) + L-glutamate + ADP + phosphate + H(+). It carries out the reaction L-aspartyl-tRNA(Asn) + L-glutamine + ATP + H2O = L-asparaginyl-tRNA(Asn) + L-glutamate + ADP + phosphate + 2 H(+). Its function is as follows. Allows the formation of correctly charged Asn-tRNA(Asn) or Gln-tRNA(Gln) through the transamidation of misacylated Asp-tRNA(Asn) or Glu-tRNA(Gln) in organisms which lack either or both of asparaginyl-tRNA or glutaminyl-tRNA synthetases. The reaction takes place in the presence of glutamine and ATP through an activated phospho-Asp-tRNA(Asn) or phospho-Glu-tRNA(Gln). The chain is Aspartyl/glutamyl-tRNA(Asn/Gln) amidotransferase subunit B from Deinococcus radiodurans (strain ATCC 13939 / DSM 20539 / JCM 16871 / CCUG 27074 / LMG 4051 / NBRC 15346 / NCIMB 9279 / VKM B-1422 / R1).